The chain runs to 700 residues: Non-hemolytic phospholipase C (700 aa).

Residues 1–34 constitute a signal peptide (tat-type signal); it reads MTNQNRRDFLRLAAGTAGAAALQLFPPVIREALA.

Belongs to the bacterial phospholipase C family. In terms of processing, predicted to be exported by the Tat system. The position of the signal peptide cleavage has not been experimentally proven.

It catalyses the reaction a 1,2-diacyl-sn-glycero-3-phosphocholine + H2O = phosphocholine + a 1,2-diacyl-sn-glycerol + H(+). Its function is as follows. Hydrolyzes phosphatidylserine as well as phosphatidylcholine. The protein is Non-hemolytic phospholipase C (plcN) of Burkholderia pseudomallei (strain K96243).